A 192-amino-acid polypeptide reads, in one-letter code: Immunoglobulin superfamily member 23 (192 aa).

A disordered region spans residues 1–26; the sequence is MRAKPQSPLPRNPVPAWSPPTTTTDP. A compositionally biased stretch (pro residues) spans 7 to 18; that stretch reads SPLPRNPVPAWS. Positions 20–128 constitute an Ig-like domain; that stretch reads PTTTTDPMLE…QLVSEPVTIS (109 aa). N-linked (GlcNAc...) asparagine glycosylation occurs at Asn64. A helical transmembrane segment spans residues 158–178; sequence LLAAGILGAGALIAGMCFIII.

Expressed in bone and small intestine. Highly expressed in osteoclasts, and low expressed in osteoblasts and peripheral blood mononuclear cells (PBMCs).

Its subcellular location is the cell membrane. Functionally, may be involved in osteoclast differentiation. In Homo sapiens (Human), this protein is Immunoglobulin superfamily member 23.